We begin with the raw amino-acid sequence, 78 residues long: U7-lycotoxin-Ls1f (78 aa).

The first 22 residues, 1–22 (MKLIIFTGLALLLIVSLIDVEA), serve as a signal peptide directing secretion. The propeptide occupies 23–26 (QNEG).

Belongs to the neurotoxin 19 (CSTX) family. 07 (U7-Lctx) subfamily. In terms of processing, contains 4 disulfide bonds. As to expression, expressed by the venom gland.

It is found in the secreted. In Lycosa singoriensis (Wolf spider), this protein is U7-lycotoxin-Ls1f.